Consider the following 158-residue polypeptide: SsrA-binding protein (158 aa).

Belongs to the SmpB family.

The protein resides in the cytoplasm. Required for rescue of stalled ribosomes mediated by trans-translation. Binds to transfer-messenger RNA (tmRNA), required for stable association of tmRNA with ribosomes. tmRNA and SmpB together mimic tRNA shape, replacing the anticodon stem-loop with SmpB. tmRNA is encoded by the ssrA gene; the 2 termini fold to resemble tRNA(Ala) and it encodes a 'tag peptide', a short internal open reading frame. During trans-translation Ala-aminoacylated tmRNA acts like a tRNA, entering the A-site of stalled ribosomes, displacing the stalled mRNA. The ribosome then switches to translate the ORF on the tmRNA; the nascent peptide is terminated with the 'tag peptide' encoded by the tmRNA and targeted for degradation. The ribosome is freed to recommence translation, which seems to be the essential function of trans-translation. This Acinetobacter baumannii (strain AB307-0294) protein is SsrA-binding protein.